A 208-amino-acid chain; its full sequence is Proheparin-binding EGF-like growth factor (208 aa).

The N-terminal stretch at 1–23 (MKLLPSVVLKLFLAAVFSALVTG) is a signal peptide. Residues 24 to 62 (ESLERLRRGLADGTSNLVSPTESTDQLLPPGGGRGREVL) constitute a propeptide that is removed on maturation. At 24-161 (ESLERLRRGL…NRLYTYDHTT (138 aa)) the chain is on the extracellular side. Over residues 37 to 49 (TSNLVSPTESTDQ) the composition is skewed to polar residues. 2 disordered regions span residues 37–57 (TSNLVSPTESTDQLLPPGGGR) and 81–104 (QALATPSKEERGKRKKKGKGLGKK). The O-linked (GalNAc...) threonine glycan is linked to T85. The segment covering 93–102 (KRKKKGKGLG) has biased composition (basic residues). The EGF-like domain occupies 104-144 (KRDPCLRKYKDFCIHGECKYVKELRAPSCICHPGYHGERCH). Intrachain disulfides connect C108-C121, C116-C132, and C134-C143. A propeptide spans 149-208 (PVKNRLYTYDHTTILAVVAVVLSSVCLLVIVGLLMFRYHRRGGYDVENEEKVKLGVTASH) (C-terminal). The chain crosses the membrane as a helical span at residues 162–182 (ILAVVAVVLSSVCLLVIVGLL). Residues 183–208 (MFRYHRRGGYDVENEEKVKLGVTASH) lie on the Cytoplasmic side of the membrane.

As to quaternary structure, interacts with FBLN1. Interacts with EGFR and ERBB4. O-glycosylated. As to expression, macrophages, midbrain, cerebellum, hypothalamus, cerebral cortex, bulbourethral gland, lung, heart ventricle, kidney, skin, prostate, seminal vesicle, testis; at low levels in lymph node, thymus, spleen; not detected in pituitary, olfactory bulb, thyroid, duodenum, pancreas, liver, submaxillary gland.

It localises to the secreted. It is found in the extracellular space. Its subcellular location is the cell membrane. In terms of biological role, growth factor that mediates its effects via EGFR, ERBB2 and ERBB4. Required for normal cardiac valve formation and normal heart function. Promotes smooth muscle cell proliferation. May be involved in macrophage-mediated cellular proliferation. It is mitogenic for fibroblasts, but not endothelial cells. It is able to bind EGF receptor/EGFR with higher affinity than EGF itself and is a far more potent mitogen for smooth muscle cells than EGF. Also acts as a diphtheria toxin receptor. The polypeptide is Proheparin-binding EGF-like growth factor (HBEGF) (Sus scrofa (Pig)).